The sequence spans 91 residues: Small ribosomal subunit protein uS19 (91 aa).

Positions 72–91 (GEFSPTRTYTGHGSEKGKKK) are disordered.

This sequence belongs to the universal ribosomal protein uS19 family.

In terms of biological role, protein S19 forms a complex with S13 that binds strongly to the 16S ribosomal RNA. The chain is Small ribosomal subunit protein uS19 from Mycoplasma mobile (strain ATCC 43663 / 163K / NCTC 11711) (Mesomycoplasma mobile).